The primary structure comprises 217 residues: Fucoxanthin-chlorophyll a-c binding protein B, chloroplastic (217 aa).

A chloroplast-targeting transit peptide spans 1–39; it reads MKSAVMAVACAAAPGFRGPSAFNGAALTTSAKACSAMKM. The next 3 membrane-spanning stretches (helical) occupy residues 81-101, 122-142, and 183-203; these read IAML…PGML, IPPA…LAVM, and GRAA…NNKP.

The protein belongs to the fucoxanthin chlorophyll protein family. The LHC complex of chromophytic algae is composed of fucoxanthin, chlorophyll A and C bound non-covalently by fucoxanthin chlorophyll proteins (FCPs). The ratio of pigments in this LHC is; fucoxanthin: chlorophyll C: chlorophyll A; (0.6-1): (0.1-0.3): (1).

The protein resides in the plastid. The protein localises to the chloroplast thylakoid membrane. Functionally, the light-harvesting complex (LHC) functions as a light receptor, it captures and delivers excitation energy to photosystems with which it is closely associated. Energy is transferred from the carotenoid and chlorophyll C (or B) to chlorophyll A and the photosynthetic reaction centers where it is used to synthesize ATP and reducing power. The sequence is that of Fucoxanthin-chlorophyll a-c binding protein B, chloroplastic (FCPB) from Macrocystis pyrifera (Giant kelp).